Consider the following 518-residue polypeptide: Bifunctional purine biosynthesis protein PurH (518 aa).

The MGS-like domain occupies 1-144 (MNRRAVLSVS…KNQERVSIVV (144 aa)).

This sequence belongs to the PurH family.

It carries out the reaction (6R)-10-formyltetrahydrofolate + 5-amino-1-(5-phospho-beta-D-ribosyl)imidazole-4-carboxamide = 5-formamido-1-(5-phospho-D-ribosyl)imidazole-4-carboxamide + (6S)-5,6,7,8-tetrahydrofolate. The enzyme catalyses IMP + H2O = 5-formamido-1-(5-phospho-D-ribosyl)imidazole-4-carboxamide. It functions in the pathway purine metabolism; IMP biosynthesis via de novo pathway; 5-formamido-1-(5-phospho-D-ribosyl)imidazole-4-carboxamide from 5-amino-1-(5-phospho-D-ribosyl)imidazole-4-carboxamide (10-formyl THF route): step 1/1. The protein operates within purine metabolism; IMP biosynthesis via de novo pathway; IMP from 5-formamido-1-(5-phospho-D-ribosyl)imidazole-4-carboxamide: step 1/1. This Desulfitobacterium hafniense (strain DSM 10664 / DCB-2) protein is Bifunctional purine biosynthesis protein PurH.